The following is a 550-amino-acid chain: CTP synthase (550 aa).

Positions 1–270 (MTKFVFVTGG…DRLICEELRL (270 aa)) are amidoligase domain. S13 contacts CTP. Residue S13 participates in UTP binding. ATP is bound by residues 14–19 (SLGKGI) and D71. Mg(2+)-binding residues include D71 and E144. CTP is bound by residues 151-153 (DIE), 191-196 (KTKPTQ), and K227. UTP is bound by residues 191 to 196 (KTKPTQ) and K227. The 253-residue stretch at 295-547 (TIGMVGKYVD…VEAALASQQR (253 aa)) folds into the Glutamine amidotransferase type-1 domain. Position 356 (G356) interacts with L-glutamine. Residue C383 is the Nucleophile; for glutamine hydrolysis of the active site. L-glutamine-binding positions include 384–387 (LGMQ), E407, and R473. Active-site residues include H520 and E522.

The protein belongs to the CTP synthase family. Homotetramer.

The catalysed reaction is UTP + L-glutamine + ATP + H2O = CTP + L-glutamate + ADP + phosphate + 2 H(+). The enzyme catalyses L-glutamine + H2O = L-glutamate + NH4(+). It catalyses the reaction UTP + NH4(+) + ATP = CTP + ADP + phosphate + 2 H(+). The protein operates within pyrimidine metabolism; CTP biosynthesis via de novo pathway; CTP from UDP: step 2/2. Its activity is regulated as follows. Allosterically activated by GTP, when glutamine is the substrate; GTP has no effect on the reaction when ammonia is the substrate. The allosteric effector GTP functions by stabilizing the protein conformation that binds the tetrahedral intermediate(s) formed during glutamine hydrolysis. Inhibited by the product CTP, via allosteric rather than competitive inhibition. Its function is as follows. Catalyzes the ATP-dependent amination of UTP to CTP with either L-glutamine or ammonia as the source of nitrogen. Regulates intracellular CTP levels through interactions with the four ribonucleotide triphosphates. This is CTP synthase from Cupriavidus necator (strain ATCC 17699 / DSM 428 / KCTC 22496 / NCIMB 10442 / H16 / Stanier 337) (Ralstonia eutropha).